The sequence spans 350 residues: 4-hydroxy-2-oxovalerate aldolase 2 (350 aa).

One can recognise a Pyruvate carboxyltransferase domain in the interval 8-260 (ITVHDMTLRD…ETGVDVFKIQ (253 aa)). 16-17 (RD) is a binding site for substrate. Aspartate 17 lines the Mn(2+) pocket. The active-site Proton acceptor is the histidine 20. Substrate is bound by residues serine 170 and histidine 199. The Mn(2+) site is built by histidine 199 and histidine 201. Substrate is bound at residue tyrosine 290.

This sequence belongs to the 4-hydroxy-2-oxovalerate aldolase family.

It catalyses the reaction (S)-4-hydroxy-2-oxopentanoate = acetaldehyde + pyruvate. The polypeptide is 4-hydroxy-2-oxovalerate aldolase 2 (tesG) (Comamonas testosteroni (Pseudomonas testosteroni)).